The following is a 633-amino-acid chain: DEAD-box ATP-dependent RNA helicase 27 (633 aa).

Basic and acidic residues predominate over residues 1–17 (MANLDMEQHSSENEEIK). The interval 1-147 (MANLDMEQHS…DKEEEKKLEE (147 aa)) is disordered. Residues 2 to 34 (ANLDMEQHSSENEEIKKKKHKKRARDEAKKLKQ) are a coiled coil. 2 stretches are compositionally biased toward acidic residues: residues 37-47 (MEEEPDHEDGD) and 74-83 (DDGEDEAVAE). Residues 88–97 (KKKKKNKKLQ) are compositionally biased toward basic residues. Composition is skewed to acidic residues over residues 103 to 114 (NDEEDEVIAEEE) and 131 to 140 (SEEEEVEDKE). Residues 117 to 153 (KKKKKKQRKDTEAKSEEEEVEDKEEEKKLEETSIMTN) adopt a coiled-coil conformation. Residues 154–182 (KTFESLSLSDNTYKSIKEMGFARMTQIQA) carry the Q motif motif. The region spanning 185–360 (IPPLMMGEDV…RVSLTSPVYI (176 aa)) is the Helicase ATP-binding domain. 198 to 205 (ARTGSGKT) is an ATP binding site. The DEAD box signature appears at 308-311 (DEAD). Residues 386 to 534 (RLLFLLTFLK…EHEFEEKKLL (149 aa)) enclose the Helicase C-terminal domain. The interval 608 to 633 (KREPVNKFKRGRGGGRPGGKSKFERY) is disordered.

It belongs to the DEAD box helicase family. DDX18/HAS1 subfamily.

The enzyme catalyses ATP + H2O = ADP + phosphate + H(+). The protein is DEAD-box ATP-dependent RNA helicase 27 (RH27) of Arabidopsis thaliana (Mouse-ear cress).